A 215-amino-acid polypeptide reads, in one-letter code: Pyrrolidone-carboxylate peptidase (215 aa).

Catalysis depends on residues Glu-78, Cys-141, and His-165.

It belongs to the peptidase C15 family. Homotetramer.

Its subcellular location is the cytoplasm. The catalysed reaction is Release of an N-terminal pyroglutamyl group from a polypeptide, the second amino acid generally not being Pro.. Removes 5-oxoproline from various penultimate amino acid residues except L-proline. The chain is Pyrrolidone-carboxylate peptidase from Streptococcus suis (strain 98HAH33).